The sequence spans 593 residues: High affinity cGMP-specific 3',5'-cyclic phosphodiesterase 9A (593 aa).

A disordered region spans residues 87-141 (SAGVEDKRTTSRGQSAERPLRDRRVVGLEQPRREGAFESGQVEPRPREPQGCYQE). The segment covering 104-122 (RPLRDRRVVGLEQPRREGA) has biased composition (basic and acidic residues). The PDEase domain occupies 236–557 (PRRDVPTYPK…DRYEELKRID (322 aa)). Catalysis depends on His312, which acts as the Proton donor. Residue 312 to 316 (HNFRH) coordinates 3',5'-cyclic GMP. Positions 316, 352, and 353 each coordinate Zn(2+). A 3',5'-cyclic GMP-binding site is contributed by Asp353. Position 353 (Asp353) interacts with Mg(2+). Residue Ser379 is modified to Phosphoserine. 3',5'-cyclic GMP contacts are provided by residues Asp462, Tyr484, and 512–513 (AQ). Residue Asp462 participates in Zn(2+) binding. The interval 564 to 593 (QKKTDSLTSGATEKSRERSRDVKNSEGDCA) is disordered. Residues 576–593 (EKSRERSRDVKNSEGDCA) show a composition bias toward basic and acidic residues.

This sequence belongs to the cyclic nucleotide phosphodiesterase family. PDE9 subfamily. As to quaternary structure, homodimer. Zn(2+) serves as cofactor. Mg(2+) is required as a cofactor. As to expression, expressed in all tissues examined (testis, brain, small intestine, skeletal muscle, heart, lung, thymus, spleen, placenta, kidney, liver, pancreas, ovary and prostate) except blood. Highest levels in brain, heart, kidney, spleen, prostate and colon. Isoform PDE9A12 is found in prostate. In brain, present in the cortex, cerebellum, and subiculum (at protein level). In heart, primarily localizes to myocytes.

The protein resides in the cell projection. It is found in the ruffle membrane. Its subcellular location is the cytoplasm. It localises to the perinuclear region. The protein localises to the golgi apparatus. The protein resides in the endoplasmic reticulum. It is found in the cell membrane. Its subcellular location is the sarcolemma. It catalyses the reaction 3',5'-cyclic GMP + H2O = GMP + H(+). Its pathway is purine metabolism; 3',5'-cyclic GMP degradation; GMP from 3',5'-cyclic GMP: step 1/1. Its activity is regulated as follows. Inhibited by zaprinast; inhibitor is however not specific to PDE9A. Specifically inhibited by BAY-73-6691 (1-(2-chlorophenyl)-6-((2R)-3,3,3- trifluoro-2-methylpropyl)-1,5-dihydro-4H-pyrazolo(3,4-d)pyrimidine-4-one). BAY-73-9961 has two enantiomers, (R) and (S), due to the presence of a chiral center, and both forms vary in their pattern of interaction. Specifically inhibited by PF-4181366 (4H-Pyrazolo[3,4-d]pyrimidin-4-one, 1- cyclopentyl-1,5-dihydro-6-[(3S,4S)-4-methyl- 1-(6-quinoxalinylmethyl)-3-pyrrolidinyl]-one). Specifically inhibited by PF-4449613 ((R)-6-(1-(3-phenoxyazetidin-1-yl)ethyl)-1-(tetrahydro-2H-pyran-4-yl)-1H-pyrazolo[3,4-d]pyrimidin- 4(5H)-one). Specifically inhibited by inhibitor 28 (2-((1-(2-Chlorophenyl)-4-hydroxy-1Hpyrazolo[ 3,4-d]pyrimidin-6-yl)amino)-N-(4- methoxyphenyl)propanamide): inhibitor forms a hydrogen bond with Tyr-484 and Gln-513. Specifically inhibited by 1-Cyclopentyl-6-[(1r)-1-(3-phenoxyazetidin- 1-Yl)ethyl]-1,5-dihydro-4h-pyrazolo[3,4-D] pyrimidin-4-one: inhibitor forms a hydrogen bond with Tyr-484 and Gln-513. Its function is as follows. Specifically hydrolyzes the second messenger cGMP, which is a key regulator of many important physiological processes. Highly specific: compared to other members of the cyclic nucleotide phosphodiesterase family, has the highest affinity and selectivity for cGMP. Specifically regulates natriuretic-peptide-dependent cGMP signaling in heart, acting as a regulator of cardiac hypertrophy in myocytes and muscle. Does not regulate nitric oxide-dependent cGMP in heart. Additional experiments are required to confirm whether its ability to hydrolyze natriuretic-peptide-dependent cGMP is specific to heart or is a general feature of the protein. In brain, involved in cognitive function, such as learning and long-term memory. In Homo sapiens (Human), this protein is High affinity cGMP-specific 3',5'-cyclic phosphodiesterase 9A.